Here is a 177-residue protein sequence, read N- to C-terminus: Adenylyl-sulfate kinase (177 aa).

12–19 (GLSGAGKT) contacts ATP. The Phosphoserine intermediate role is filled by Ser86.

Belongs to the APS kinase family.

The enzyme catalyses adenosine 5'-phosphosulfate + ATP = 3'-phosphoadenylyl sulfate + ADP + H(+). It participates in sulfur metabolism; hydrogen sulfide biosynthesis; sulfite from sulfate: step 2/3. In terms of biological role, catalyzes the synthesis of activated sulfate. This chain is Adenylyl-sulfate kinase, found in Picosynechococcus sp. (strain ATCC 27264 / PCC 7002 / PR-6) (Agmenellum quadruplicatum).